The primary structure comprises 85 residues: U4-theraphotoxin-Hhn1a (85 aa).

The signal sequence occupies residues Met1–Ala22. The propeptide occupies Glu23–Arg48. 3 disulfides stabilise this stretch: Cys52–Cys66, Cys56–Cys77, and Cys71–Cys82.

Belongs to the neurotoxin 12 (Hwtx-2) family. 02 (Hwtx-2) subfamily. As to quaternary structure, monomer. In terms of tissue distribution, expressed by the venom gland.

It localises to the secreted. Functionally, neurotoxin active on both insects and mammals. This chain is U4-theraphotoxin-Hhn1a, found in Cyriopagopus hainanus (Chinese bird spider).